The chain runs to 844 residues: Elongation factor 2 (844 aa).

One can recognise a tr-type G domain in the interval 17–255 (TNVRNMSVIA…LWGDNYFNPK (239 aa)). 26–33 (AHVDHGKS) is a binding site for GTP. 2 positions are modified to phosphothreonine: Thr-57 and Thr-59. GTP is bound by residues 160 to 163 (NKVD) and 215 to 217 (SGL). His-700 is subject to Diphthamide.

The protein belongs to the TRAFAC class translation factor GTPase superfamily. Classic translation factor GTPase family. EF-G/EF-2 subfamily.

It is found in the cytoplasm. It catalyses the reaction GTP + H2O = GDP + phosphate + H(+). Catalyzes the GTP-dependent ribosomal translocation step during translation elongation. During this step, the ribosome changes from the pre-translocational (PRE) to the post-translocational (POST) state as the newly formed A-site-bound peptidyl-tRNA and P-site-bound deacylated tRNA move to the P and E sites, respectively. Catalyzes the coordinated movement of the two tRNA molecules, the mRNA and conformational changes in the ribosome. The protein is Elongation factor 2 (cot-3) of Neurospora crassa (strain ATCC 24698 / 74-OR23-1A / CBS 708.71 / DSM 1257 / FGSC 987).